The sequence spans 335 residues: MKQISATSGPTNIGLLSVGSYRPQRAVTNDELCQNIDSSDEWIYSRTGIKTRRFAARDESTASMATEAGREAIAKAGLEASDIDCVVVATSTHFLQTPACGPAVAAALGATGVPAFDISAGCAGFGYALGVAADMVRGGTAGKVLVLGSEKLSPTVDMTDRSNCFIFADGAAGVVVGETPTQGIGPTVWGSDGTQATAIRQDIDWMDYLDRPTGPRPFLRLEGSAVFRWAAFEMGKVGQQAMDAAGVRPDEIDVFLPHQANSRINEILAKSLELRPDAVIANDIEHTGNTSAASIPLAMAEVLATGAAKAGDLALLIGYGAGLSYAAQVVRLPPG.

Catalysis depends on residues C122 and H258. Residues 259–263 form an ACP-binding region; that stretch reads QANSR. N289 is an active-site residue.

Belongs to the thiolase-like superfamily. FabH family. In terms of assembly, homodimer.

It is found in the cytoplasm. It carries out the reaction malonyl-[ACP] + dodecanoyl-CoA + H(+) = 3-oxotetradecanoyl-[ACP] + CO2 + CoA. It participates in lipid metabolism; fatty acid biosynthesis. Its pathway is lipid metabolism; mycolic acid biosynthesis. Its function is as follows. Catalyzes the condensation reaction of fatty acid synthesis by the addition to an acyl acceptor of two carbons from malonyl-ACP. Catalyzes the first condensation reaction which initiates fatty acid synthesis and may therefore play a role in governing the total rate of fatty acid production. Possesses both acetoacetyl-ACP synthase and acetyl transacylase activities. Its substrate specificity determines the biosynthesis of branched-chain and/or straight-chain of fatty acids. This chain is Mycobacterial beta-ketoacyl-[acyl-carrier-protein] synthase III, found in Mycobacterium avium (strain 104).